The chain runs to 340 residues: Coproporphyrin III ferrochelatase (340 aa).

2 residues coordinate Fe-coproporphyrin III: S52 and Y116. 2 residues coordinate Fe(2+): H172 and E255.

Belongs to the ferrochelatase family.

The protein localises to the cytoplasm. The enzyme catalyses Fe-coproporphyrin III + 2 H(+) = coproporphyrin III + Fe(2+). It participates in porphyrin-containing compound metabolism; protoheme biosynthesis. In terms of biological role, involved in coproporphyrin-dependent heme b biosynthesis. Catalyzes the insertion of ferrous iron into coproporphyrin III to form Fe-coproporphyrin III. The polypeptide is Coproporphyrin III ferrochelatase (Mycobacterium marinum (strain ATCC BAA-535 / M)).